A 202-amino-acid chain; its full sequence is UDP-N-acetylglucosamine transferase subunit ALG13 (202 aa).

Belongs to the glycosyltransferase 28 family. As to quaternary structure, heterodimer with ALG14 to form a functional enzyme.

It is found in the endoplasmic reticulum. The enzyme catalyses an N-acetyl-alpha-D-glucosaminyl-diphospho-di-trans,poly-cis-dolichol + UDP-N-acetyl-alpha-D-glucosamine = an N,N'-diacetylchitobiosyl-diphospho-di-trans,poly-cis-dolichol + UDP + H(+). Involved in protein N-glycosylation. Essential for the second step of the dolichol-linked oligosaccharide pathway. This chain is UDP-N-acetylglucosamine transferase subunit ALG13 (ALG13), found in Saccharomyces cerevisiae (strain ATCC 204508 / S288c) (Baker's yeast).